A 399-amino-acid chain; its full sequence is Phosphoglycerate kinase (399 aa).

Residues 22-24 (DLN), arginine 37, 60-63 (HFGR), arginine 119, and arginine 152 contribute to the substrate site. ATP-binding positions include lysine 202, glutamate 324, and 354–357 (GGDT).

It belongs to the phosphoglycerate kinase family. In terms of assembly, monomer.

Its subcellular location is the cytoplasm. It carries out the reaction (2R)-3-phosphoglycerate + ATP = (2R)-3-phospho-glyceroyl phosphate + ADP. Its pathway is carbohydrate degradation; glycolysis; pyruvate from D-glyceraldehyde 3-phosphate: step 2/5. This Sinorhizobium medicae (strain WSM419) (Ensifer medicae) protein is Phosphoglycerate kinase.